Consider the following 552-residue polypeptide: Putative transport protein HSM_0534 (552 aa).

The next 5 membrane-spanning stretches (helical) occupy residues 4–24 (IAIT…IGHW), 28–48 (GVGL…HFMN), 67–87 (LILF…ASLL), 95–115 (GLAT…YKVV), and 157–177 (MAYA…MWLI). RCK C-terminal domains lie at 190–275 (KQFQ…VIGE) and 277–360 (IDMP…IIGN). 6 consecutive transmembrane segments (helical) span residues 370-390 (MLPV…PFYI), 402-424 (AGGP…LYWF), 438-458 (IVLF…DTLV), 463-483 (LEWM…TGII), 495-515 (LCGL…ANAI), and 529-549 (VYPL…ILLW).

This sequence belongs to the AAE transporter (TC 2.A.81) family. YidE subfamily.

It is found in the cell membrane. This chain is Putative transport protein HSM_0534, found in Histophilus somni (strain 2336) (Haemophilus somnus).